The sequence spans 298 residues: Apolipoprotein E (298 aa).

The first 18 residues, 1–18 (MKVLWAALVVTLLAGCQA), serve as a signal peptide directing secretion. 6 tandem repeats follow at residues 74–95 (LLMEDTMKEVKAYKSELEQELA), 96–117 (PMAEDTKARLSKELQAAQSRLR), 118–139 (ADMEEVLNRLSQYRGEVQTMMG), 140–161 (QSGEELRARLAAHLRKLRKRLL), 162–183 (RDVEEVQKRMDVYRAGAQEGAE), and 223–244 (GRLEKVGSQARDRLEEVREQME). Residues 74–244 (LLMEDTMKEV…RLEEVREQME (171 aa)) form an 8 X 22 AA approximate tandem repeats region. Residue Met137 is modified to Methionine sulfoxide. Ser141 is modified (phosphoserine). An LDL and other lipoprotein receptors binding region spans residues 152 to 162 (HLRKLRKRLLR). 156-159 (LRKR) contributes to the heparin binding site. The segment at 204–272 (SLPSQPLRER…SWFEPMMEDM (69 aa)) is lipid-binding and lipoprotein association. Residue 218-225 (GEQMRGRL) coordinates heparin. The segment at 260–272 (RFKSWFEPMMEDM) is specificity for association with VLDL.

The protein belongs to the apolipoprotein A1/A4/E family. In terms of assembly, homotetramer. May interact with ABCA1; functionally associated with ABCA1 in the biogenesis of HDLs. May interact with APP/A4 amyloid-beta peptide; the interaction is extremely stable in vitro but its physiological significance is unclear. May interact with MAPT. May interact with MAP2. In the cerebrospinal fluid, interacts with secreted SORL1. Interacts with PMEL; this allows the loading of PMEL luminal fragment on ILVs to induce fibril nucleation. APOE exists as multiple glycosylated and sialylated glycoforms within cells and in plasma. The extent of glycosylation and sialylation are tissue and context specific. Post-translationally, glycated in plasma VLDL. In terms of processing, phosphorylated by FAM20C in the extracellular medium.

It localises to the secreted. The protein localises to the extracellular space. It is found in the extracellular matrix. Its subcellular location is the extracellular vesicle. The protein resides in the endosome. It localises to the multivesicular body. Functionally, APOE is an apolipoprotein, a protein associating with lipid particles, that mainly functions in lipoprotein-mediated lipid transport between organs via the plasma and interstitial fluids. APOE is a core component of plasma lipoproteins and is involved in their production, conversion and clearance. Apolipoproteins are amphipathic molecules that interact both with lipids of the lipoprotein particle core and the aqueous environment of the plasma. As such, APOE associates with chylomicrons, chylomicron remnants, very low density lipoproteins (VLDL) and intermediate density lipoproteins (IDL) but shows a preferential binding to high-density lipoproteins (HDL). It also binds a wide range of cellular receptors including the LDL receptor/LDLR, the LDL receptor-related proteins LRP1, LRP2 and LRP8 and the very low-density lipoprotein receptor/VLDLR that mediate the cellular uptake of the APOE-containing lipoprotein particles. Finally, APOE also has a heparin-binding activity and binds heparan-sulfate proteoglycans on the surface of cells, a property that supports the capture and the receptor-mediated uptake of APOE-containing lipoproteins by cells. A main function of APOE is to mediate lipoprotein clearance through the uptake of chylomicrons, VLDLs, and HDLs by hepatocytes. APOE is also involved in the biosynthesis by the liver of VLDLs as well as their uptake by peripheral tissues ensuring the delivery of triglycerides and energy storage in muscle, heart and adipose tissues. By participating in the lipoprotein-mediated distribution of lipids among tissues, APOE plays a critical role in plasma and tissues lipid homeostasis. APOE is also involved in two steps of reverse cholesterol transport, the HDLs-mediated transport of cholesterol from peripheral tissues to the liver, and thereby plays an important role in cholesterol homeostasis. First, it is functionally associated with ABCA1 in the biogenesis of HDLs in tissues. Second, it is enriched in circulating HDLs and mediates their uptake by hepatocytes. APOE also plays an important role in lipid transport in the central nervous system, regulating neuron survival and sprouting. This chain is Apolipoprotein E (APOE), found in Dasyprocta punctata (Central American agouti).